The primary structure comprises 198 residues: CXXC-type zinc finger protein 4 (198 aa).

A disordered region spans residues Asn-114–Lys-134. The CXXC-type zinc finger occupies Ala-132–Glu-173. Residues Cys-139, Cys-142, Cys-145, Cys-151, Cys-154, and Cys-157 each coordinate Zn(2+). Residues Lys-161 to Ile-166 are interaction with DVL1. Zn(2+)-binding residues include Cys-167 and Cys-172.

Interacts with the PDZ domain of DVL1.

The protein resides in the cytoplasm. Its function is as follows. Acts as a negative regulator of the Wnt signaling pathway via its interaction with DVL1. Binds preferentially to DNA containing cytidine-phosphate-guanosine (CpG) dinucleotides over CpH (H=A, T, and C), hemimethylated-CpG and hemimethylated-hydroxymethyl-CpG. The sequence is that of CXXC-type zinc finger protein 4 (CXXC4) from Homo sapiens (Human).